Here is an 80-residue protein sequence, read N- to C-terminus: Venom protein HGE029 (80 aa).

The N-terminal stretch at 1–22 is a signal peptide; the sequence is MNAKAFLAIFMIALLITDRAEA.

Belongs to the non-disulfide-bridged peptide (NDBP) superfamily. Long chain multifunctional peptide (group 2) family. As to expression, expressed by the venom gland.

It is found in the secreted. The protein is Venom protein HGE029 of Hoffmannihadrurus gertschi (Scorpion).